The primary structure comprises 7071 residues: Replicase polyprotein 1ab (7071 aa).

One can recognise a CoV Nsp1 globular domain in the interval 12 to 127; sequence THVQLSLPVL…YRNVLLRKNG (116 aa). A BetaCoV Nsp1 C-terminal domain is found at 148–179; it reads ELGTDPIEDYEQNWNTKHGSGVLRELTRELNG. Positions 183–456 constitute a CoV Nsp2 N-terminal domain; it reads TRYVDNNFCG…NEDLLEILSR (274 aa). The Zn(2+) site is built by cysteine 200, cysteine 231, histidine 234, histidine 236, cysteine 323, cysteine 326, cysteine 341, cysteine 344, cysteine 370, cysteine 373, histidine 382, and cysteine 416. The interval 200-236 is C2H2; it reads CIKDLLARAGKSMCTLSEQLDYIESKRGVYCCRDHGH. The tract at residues 323-344 is C4; sequence CNHCDEVSWQTCDFLKATCEQC. Residues 370–416 form a C2HC region; sequence CPACQDPEIGPEHSAADYHNHSNIETRLRKGGRTRCFGGCVFAYVGC. Positions 458–688 constitute a CoV Nsp2 middle domain; the sequence is RVNINIVGDF…VDVVNKALEM (231 aa). Positions 690-818 constitute a CoV Nsp2 C-terminal domain; that stretch reads IDQVTIAGAK…TNNVFRLKGG (129 aa). A Ubiquitin-like 1 domain is found at 822-930; the sequence is KGVTFGEDTV…MYCSFYPPDE (109 aa). 3 consecutive Macro domains span residues 1001–1167, 1205–1333, and 1341–1468; these read VNQL…MDYL, KIKA…LPSE, and ILGT…TSSS. A DPUP domain is found at 1470–1536; it reads TSEDHFVETV…PLDKLKSLLS (67 aa). The Ubiquitin-like 2 domain occupies 1540-1595; sequence VKTIKVFTTVDNTNLHTQLVDMSMTYGQQLGPTYLEGADVTKIKPHVNHEGKTFFV. The Peptidase C16 domain maps to 1609 to 1873; the sequence is YYHTLDESFL…YTEIEPKLDG (265 aa). Residue cysteine 1649 is the For PL-PRO activity of the active site. Positions 1727, 1730, 1762, and 1764 each coordinate Zn(2+). A C4-type zinc finger spans residues 1727-1764; the sequence is CKHCGQKTTTLTGVEAVMYMGTLSYDNLKMGVSIPCVC. Active-site for PL-PRO activity residues include histidine 1810 and aspartate 1824. Positions 1886 to 1996 constitute a Nucleic acid-binding domain; the sequence is PIDLIPTQPL…CLWSTKPVDT (111 aa). In terms of domain architecture, G2M spans 2021–2130; the sequence is PTPEEVVENP…LGQAAVTTSN (110 aa). Residues 2201–2221 traverse the membrane as a helical segment; it reads LFTIAMWLLLLSICLGSLIYV. Positions 2201 to 2369 are HD1; that stretch reads LFTIAMWLLL…IFFASFYYIW (169 aa). The 3Ecto domain maps to 2222 to 2292; it reads TAALGVLLSN…QVTISSYKLD (71 aa). 2 disulfide bridges follow: cysteine 2238-cysteine 2266 and cysteine 2257-cysteine 2263. 2 helical membrane-spanning segments follow: residues 2312–2334 and 2349–2369; these read FFYL…SHFI and MAPV…YYIW. Residues 2370–2460 form a Y1 region; it reads KSYVHIMDGC…QFKRPINPTD (91 aa). The CoV Nsp3 Y domain occupies 2370-2738; that stretch reads KSYVHIMDGC…ITTKISLKGG (369 aa). Zn(2+) is bound by residues histidine 2374, cysteine 2379, cysteine 2384, cysteine 2387, cysteine 2420, histidine 2423, cysteine 2427, and cysteine 2430. Residues 2374–2387 form a ZF1 region; that stretch reads HIMDGCTSSTCMMC. Residues 2420-2430 are ZF2; it reads CKTHNWNCLNC. Residues 2461–2555 are Y2; it reads QSSYVVDSVA…LLDQALVSDV (95 aa). The interval 2461 to 2738 is coV-Y; it reads QSSYVVDSVA…ITTKISLKGG (278 aa). Residues 2556 to 2637 are Y3; that stretch reads GDSTEVSVKM…ECLKLSHHSD (82 aa). Positions 2638–2738 are Y4; sequence LEVTGDSCNN…ITTKISLKGG (101 aa). The next 6 helical transmembrane spans lie at 2753-2773, 3020-3040, 3059-3079, 3081-3101, 3103-3123, and 3140-3160; these read LLCV…ILSV, ASVV…YYFM, LFLM…LPGV, SVFY…LAHL, WFAM…VFCI, and VVFN…TFLL. The tract at residues 2753 to 3160 is HD2; sequence LLCVLAALVC…EEAALCTFLL (408 aa). Positions 3140–3238 constitute a Nsp4C domain; it reads VVFNGVTFST…QTSITSAVLQ (99 aa). The 306-residue stretch at 3239 to 3544 folds into the Peptidase C30 domain; sequence SGFRKMAFPS…VRQCSGVTFQ (306 aa). Catalysis depends on for 3CL-PRO activity residues histidine 3279 and cysteine 3383. 7 helical membrane-spanning segments follow: residues 3562–3582, 3584–3604, 3610–3630, 3657–3676, 3683–3702, 3726–3746, and 3754–3774; these read FLTS…FFVY, NAFL…MLLV, FLCL…MVYM, CVMY…RTVY, VWTL…GNAL, IMFL…LLFI, and IMLV…LFCL. The HD3 stretch occupies residues 3562-3774; that stretch reads FLTSLLILVQ…CCCYFGLFCL (213 aa). One can recognise a RdRp Nsp7 cofactor domain in the interval 3835–3917; sequence SKMSDVKCTS…EMLDNRATLQ (83 aa). The RdRp Nsp8 cofactor domain maps to 3918–4115; it reads AIASEFSSLP…LRANSAVKLQ (198 aa). The region spanning 4116–4228 is the Nsp9 ssRNA-binding domain; the sequence is NNELSPVALR…GSLAATVRLQ (113 aa). The ExoN/MTase coactivator domain maps to 4229–4367; that stretch reads AGNATEVPAN…CDQLREPMMQ (139 aa). Positions 4302, 4305, 4311, 4318, 4345, 4348, 4356, and 4358 each coordinate Zn(2+). 2 zinc fingers span residues 4302–4318 and 4345–4358; these read CLYC…KGFC and CTVC…GCSC. The NiRAN domain maps to 4374–4628; that stretch reads FLNRVCGVSA…AAESHMDADL (255 aa). 2 residues coordinate Mn(2+): asparagine 4576 and aspartate 4585. One can recognise a Nsp12 Interface domain in the interval 4633 to 4731; sequence IKWDLLKYDF…HNQDVNLHSS (99 aa). Zn(2+)-binding residues include histidine 4662, cysteine 4668, cysteine 4673, cysteine 4677, and cysteine 4854. In terms of domain architecture, Nsp12 RNA-dependent RNA polymerase spans 4732-5299; the sequence is RLSFKELLVY…AMYTPHTVLQ (568 aa). Residues 4734-4948 are rdRp Fingers N-ter; sequence SFKELLVYAA…HQKLLKSIAA (215 aa). The tract at residues 4949–4987 is rdRp Palm N-ter; it reads TRGATVVIGTSKFYGGWHNMLKTVYSDVETPHLMGWDYP. Positions 4979–5141 constitute a RdRp catalytic domain; sequence PHLMGWDYPK…CYNSNYAAQG (163 aa). A rdRp Fingers C-ter region spans residues 4988-5046; the sequence is KCDRAMPNMLRIMASLVLARKHSTCCNLSHRFYRLANECAQVLSEMVMCGGSLYVKPGG. 3 residues coordinate Zn(2+): histidine 5009, cysteine 5012, and cysteine 5013. A rdRp Palm C-ter region spans residues 5047-5182; sequence TSSGDATTAY…TKGPHEFCSQ (136 aa). Active-site residues include serine 5126, aspartate 5127, and aspartate 5128. The segment at 5183-5299 is rdRp Thumb; that stretch reads HTMLVKQGDD…AMYTPHTVLQ (117 aa). The region spanning 5300–5412 is the CV ZBD domain; that stretch reads AVGACVLCNS…TDFNAIATCD (113 aa). Residues cysteine 5304, cysteine 5307, cysteine 5315, cysteine 5318, cysteine 5325, cysteine 5328, histidine 5332, histidine 5338, cysteine 5349, cysteine 5354, cysteine 5371, and histidine 5374 each contribute to the Zn(2+) site. In terms of domain architecture, (+)RNA virus helicase ATP-binding spans 5556-5737; it reads NISDEFSSNV…MKTIGPDMFL (182 aa). 5581-5588 is an ATP binding site; it reads GPPGTGKS. A (+)RNA virus helicase C-terminal domain is found at 5738-5907; the sequence is GTCRRCPAEI…TLQAENVTGL (170 aa). Residues 5972-6187 enclose the ExoN domain; that stretch reads MFITREEAIR…RCLAVHECFV (216 aa). Catalysis depends on residues aspartate 5990, glutamate 5992, and glutamate 6091. Positions 6107, 6110, 6126, 6129, 6157, 6161, and 6164 each coordinate Zn(2+). Catalysis depends on residues histidine 6168 and aspartate 6173. Zn(2+) is bound at residue cysteine 6179. Positions 6196 to 6427 constitute an N7-MTase domain; that stretch reads YPIIGDELKI…NLWNTFTRLQ (232 aa). Residue 6231–6237 coordinates S-adenosyl-L-methionine; the sequence is DIGNPKA. The gpppA-binding stretch occupies residues 6314–6328; sequence CDGGSLYVNKHAFHT. Positions 6352, 6373, 6384, and 6387 each coordinate Zn(2+). One can recognise a Nsp15 N-terminal oligomerization domain in the interval 6428-6488; the sequence is SLENVAYNVV…NVAFELWAKR (61 aa). The region spanning 6489 to 6614 is the AV-Nsp11N/CoV-Nsp15M domain; sequence NIKSVPEIKI…YFKKVDGIIQ (126 aa). The NendoU domain maps to 6631–6770; it reads KPRSQMETDF…KDGHVETFYP (140 aa). Residues histidine 6661, histidine 6676, lysine 6716, lysine 6819, aspartate 6903, lysine 6943, and glutamate 6976 contribute to the active site. A Nidovirus-type SAM-dependent 2'-O-MTase domain is found at 6775–7069; the sequence is SQAWQPGVAM…RVVVSSDILV (295 aa).

The protein belongs to the coronaviruses polyprotein 1ab family. As to quaternary structure, interacts with host PHB and PHB2. In terms of assembly, interacts with papain-like protease nsp3 and non-structural protein 6. Monomer. Homodimer. Only the homodimer shows catalytic activity. As to quaternary structure, interacts with nsp8 and nsp12 to form the replication-transcription complex (RTC): nsp12, nsp7, two subunits of nsp8, and up to two subunits of nsp13. In terms of assembly, interacts with nsp7, nsp13 and nsp12 to form the replication-transcription complex (RTC): nsp12, nsp7, two subunits of nsp8, and up to two subunits of nsp13. Interacts with nsp12. As to quaternary structure, interacts with proofreading exoribonuclease nsp14 and 2'-O-methyltransferase nsp16; these interactions enhance nsp14 and nsp16 enzymatic activities. In terms of assembly, interacts with nsp7 and nsp8 to form the replication-transcription complex (RTC): nsp12, nsp7, two subunits of nsp8, and up to two subunits of nsp13. Interacts with nsp9. Interacts with nsp8 to form the replication-transcription complex (RTC): nsp12, nsp7, two subunits of nsp8, and up to two subunits of nsp13. The cofactor is Mn(2+). It depends on Mg(2+) as a cofactor. Post-translationally, specific enzymatic cleavages in vivo by its own proteases yield mature proteins. 3CL-PRO and PL-PRO proteinases are autocatalytically processed.

The protein localises to the host membrane. It is found in the host cytoplasm. Its subcellular location is the host perinuclear region. It localises to the host endoplasmic reticulum-Golgi intermediate compartment. The enzyme catalyses RNA(n) + a ribonucleoside 5'-triphosphate = RNA(n+1) + diphosphate. It carries out the reaction ATP + H2O = ADP + phosphate + H(+). It catalyses the reaction Thiol-dependent hydrolysis of ester, thioester, amide, peptide and isopeptide bonds formed by the C-terminal Gly of ubiquitin (a 76-residue protein attached to proteins as an intracellular targeting signal).. The catalysed reaction is a 5'-end (N(7)-methyl 5'-triphosphoguanosine)-ribonucleoside in mRNA + S-adenosyl-L-methionine = a 5'-end (N(7)-methyl 5'-triphosphoguanosine)-(2'-O-methyl-ribonucleoside) in mRNA + S-adenosyl-L-homocysteine + H(+). The enzyme catalyses uridylyl-uridylyl-ribonucleotide-RNA = a 3'-end uridylyl-2',3'-cyclophospho-uridine-RNA + a 5'-end dephospho-ribonucleoside-RNA. It carries out the reaction a 5'-end diphospho-ribonucleoside in mRNA + GTP + H(+) = a 5'-end (5'-triphosphoguanosine)-ribonucleoside in mRNA + diphosphate. It catalyses the reaction a 5'-end (5'-triphosphoguanosine)-ribonucleoside in mRNA + S-adenosyl-L-methionine = a 5'-end (N(7)-methyl 5'-triphosphoguanosine)-ribonucleoside in mRNA + S-adenosyl-L-homocysteine. In terms of biological role, the replicase polyprotein of coronaviruses is a multifunctional protein: it contains the activities necessary for the transcription of negative stranded RNA, leader RNA, subgenomic mRNAs and progeny virion RNA as well as proteinases responsible for the cleavage of the polyprotein into functional products. Its function is as follows. Inhibits host translation by interacting with the 40S ribosomal subunit. The nsp1-40S ribosome complex further induces an endonucleolytic cleavage near the 5'UTR of host mRNAs, targeting them for degradation. Viral mRNAs are not susceptible to nsp1-mediated endonucleolytic RNA cleavage thanks to the presence of a 5'-end leader sequence and are therefore protected from degradation. By suppressing host gene expression, nsp1 facilitates efficient viral gene expression in infected cells and evasion from host immune response. Functionally, may play a role in the modulation of host cell survival signaling pathway by interacting with host PHB and PHB2. Indeed, these two proteins play a role in maintaining the functional integrity of the mitochondria and protecting cells from various stresses. Responsible for the cleavages located at the N-terminus of the replicase polyprotein. In addition, PL-PRO possesses a deubiquitinating/deISGylating activity and processes both 'Lys-48'- and 'Lys-63'-linked polyubiquitin chains from cellular substrates. Participates together with nsp4 in the assembly of virally-induced cytoplasmic double-membrane vesicles necessary for viral replication. Antagonizes innate immune induction of type I interferon by blocking the phosphorylation, dimerization and subsequent nuclear translocation of host IRF3. Also prevents host NF-kappa-B signaling. In terms of biological role, participates in the assembly of virally-induced cytoplasmic double-membrane vesicles necessary for viral replication. Its function is as follows. Cleaves the C-terminus of replicase polyprotein at 11 sites. Recognizes substrates containing the core sequence [ILMVF]-Q-|-[SGACN]. Also able to bind an ADP-ribose-1''-phosphate (ADRP). Functionally, plays a role in the initial induction of autophagosomes from host endoplasmic reticulum. Later, limits the expansion of these phagosomes that are no longer able to deliver viral components to lysosomes. Forms a hexadecamer with nsp8 (8 subunits of each) that may participate in viral replication by acting as a primase. Alternatively, may synthesize substantially longer products than oligonucleotide primers. In terms of biological role, forms a hexadecamer with nsp7 (8 subunits of each) that may participate in viral replication by acting as a primase. Alternatively, may synthesize substantially longer products than oligonucleotide primers. Its function is as follows. Forms a primer, NSP9-pU, which is utilized by the polymerase for the initiation of RNA chains. Interacts with ribosome signal recognition particle RNA (SRP). Together with NSP8, suppress protein integration into the cell membrane, thereby disrupting host immune defenses. Functionally, plays a pivotal role in viral transcription by stimulating both nsp14 3'-5' exoribonuclease and nsp16 2'-O-methyltransferase activities. Therefore plays an essential role in viral mRNAs cap methylation. RNA-directed RNA polymerase that catalyzes the transcription of viral genomic and subgenomic RNAs. Acts in complex with nsp7 and nsp8 to transcribe both the minus and positive strands of genomic RNA. The kinase-like NiRAN domain of NSP12 attaches one or more nucleotides to the amino terminus of NSP9, forming a covalent RNA-protein intermediate that serves as transcription/replication primer. Subgenomic RNAs (sgRNAs) are formed by discontinuous transcription: The polymerase has the ability to pause at transcription-regulating sequences (TRS) and jump to the leader TRS, resulting in a major deletion. This creates a series of subgenomic RNAs that are replicated, transcribed and translated. In addition, Nsp12 is a subunit of the viral RNA capping enzyme that catalyzes the RNA guanylyltransferase reaction for genomic and sub-genomic RNAs. Subsequently, the NiRAN domain transfers RNA to GDP, and forms the core cap structure GpppA-RNA. In terms of biological role, multi-functional protein with a zinc-binding domain in N-terminus displaying RNA and DNA duplex-unwinding activities with 5' to 3' polarity. Activity of helicase is dependent on magnesium. Its function is as follows. Plays a role in viral RNA synthesis through two distinct activities. The N7-guanine methyltransferase activity plays a role in the formation of the cap structure GpppA-RNA. The proofreading exoribonuclease reduces the sensitivity of the virus to RNA mutagens during replication. This activity acts on both ssRNA and dsRNA in a 3'-5' direction. Functionally, plays a role in viral transcription/replication and prevents the simultaneous activation of host cell dsRNA sensors, such as MDA5/IFIH1, OAS, and PKR. Acts by degrading the 5'-polyuridines generated during replication of the poly(A) region of viral genomic and subgenomic RNAs. Catalyzes a two-step reaction in which a 2'3'-cyclic phosphate (2'3'-cP) is first generated by 2'-O transesterification, which is then hydrolyzed to a 3'-phosphate (3'-P). If not degraded, poly(U) RNA would hybridize with poly(A) RNA tails and activate host dsRNA sensors. Methyltransferase that mediates mRNA cap 2'-O-ribose methylation to the 5'-cap structure of viral mRNAs. N7-methyl guanosine cap is a prerequisite for binding of nsp16. Therefore plays an essential role in viral mRNAs cap methylation which is essential to evade immune system. This Rhinolophus ferrumequinum (Greater horseshoe bat) protein is Replicase polyprotein 1ab (rep).